Reading from the N-terminus, the 244-residue chain is Tabinhibitin 8 (244 aa).

Positions 1–23 (MTSILVSRFKISALTLQYATSDS) are cleaved as a signal peptide. Positions 67-194 (YTGGGIIVLR…KTPLFFSSNC (128 aa)) constitute an SCP domain. The Cell attachment site signature appears at 143–145 (RGD).

The protein belongs to the CRISP family. In terms of tissue distribution, expressed in salivary glands.

It localises to the secreted. Functionally, inhibits platelet aggregation induced by all agonists tested (ADP, arachidonic acid, the thromboxane A2 analog U46619, thrombin, and snake venom snaclecs (TMVA that activates platelet through GPIB, and stejnulxin that specifically acts through GPVI (GP6))). May act by competing with fibrinogen for binding to glycoprotein IIb/IIIa (ITGA2B/ITGB3). The chain is Tabinhibitin 8 from Tabanus yao (Horsefly).